Consider the following 59-residue polypeptide: Dybowskin-1CDYa (59 aa).

The first 22 residues, 1–22 (MFTLKKSLLLLFFLGTINFSLC), serve as a signal peptide directing secretion. Residues 23–44 (EEERNAEEERRDYPEERDVEVE) constitute a propeptide that is removed on maturation.

It belongs to the frog skin active peptide (FSAP) family. Brevinin subfamily. As to expression, expressed by the skin glands.

Its subcellular location is the secreted. Functionally, antimicrobial peptide. Has activity against the Gram-positive bacterium S.aureus (MIC=6 uM) and the Gram-negative bacterium E.coli (MIC=3 uM). Lacks hemolytic activity against human erythrocytes. This is Dybowskin-1CDYa from Rana dybowskii (Dybovsky's frog).